The sequence spans 507 residues: RNA-splicing ligase RtcB homolog (507 aa).

Mn(2+) contacts are provided by D121, C124, H229, H261, and H355. GMP is bound at residue 228 to 232 (NHYGE). Residues 355 to 356 (HN), 404 to 407 (GGTM), S411, 430 to 433 (HGSG), and K506 contribute to the GMP site. The active-site GMP-histidine intermediate is H430.

It belongs to the RtcB family. As to quaternary structure, catalytic component of the tRNA-splicing ligase complex. The cofactor is Mn(2+).

It carries out the reaction a 3'-end 3'-phospho-ribonucleotide-RNA + a 5'-end dephospho-ribonucleoside-RNA + GTP = a ribonucleotidyl-ribonucleotide-RNA + GMP + diphosphate. It catalyses the reaction a 3'-end 2',3'-cyclophospho-ribonucleotide-RNA + a 5'-end dephospho-ribonucleoside-RNA + GTP + H2O = a ribonucleotidyl-ribonucleotide-RNA + GMP + diphosphate + H(+). Functionally, catalytic subunit of the tRNA-splicing ligase complex that acts by directly joining spliced tRNA halves to mature-sized tRNAs by incorporating the precursor-derived splice junction phosphate into the mature tRNA as a canonical 3',5'-phosphodiester. May act as an RNA ligase with broad substrate specificity, and may function toward other RNAs. In Theileria parva (East coast fever infection agent), this protein is RNA-splicing ligase RtcB homolog.